Consider the following 113-residue polypeptide: Iron-sulfur cluster assembly protein CyaY (113 aa).

The protein belongs to the frataxin family.

Involved in iron-sulfur (Fe-S) cluster assembly. May act as a regulator of Fe-S biogenesis. The sequence is that of Iron-sulfur cluster assembly protein CyaY from Ralstonia nicotianae (strain ATCC BAA-1114 / GMI1000) (Ralstonia solanacearum).